Reading from the N-terminus, the 346-residue chain is Biotin synthase (346 aa).

A Radical SAM core domain is found at 38-256; it reads QQVQVSTLLS…IAVARIMMPT (219 aa). [4Fe-4S] cluster-binding residues include cysteine 53, cysteine 57, and cysteine 60. 4 residues coordinate [2Fe-2S] cluster: cysteine 97, cysteine 128, cysteine 188, and arginine 260.

It belongs to the radical SAM superfamily. Biotin synthase family. In terms of assembly, homodimer. [4Fe-4S] cluster serves as cofactor. Requires [2Fe-2S] cluster as cofactor.

It catalyses the reaction (4R,5S)-dethiobiotin + (sulfur carrier)-SH + 2 reduced [2Fe-2S]-[ferredoxin] + 2 S-adenosyl-L-methionine = (sulfur carrier)-H + biotin + 2 5'-deoxyadenosine + 2 L-methionine + 2 oxidized [2Fe-2S]-[ferredoxin]. It participates in cofactor biosynthesis; biotin biosynthesis; biotin from 7,8-diaminononanoate: step 2/2. Functionally, catalyzes the conversion of dethiobiotin (DTB) to biotin by the insertion of a sulfur atom into dethiobiotin via a radical-based mechanism. This Salmonella agona (strain SL483) protein is Biotin synthase.